We begin with the raw amino-acid sequence, 607 residues long: MKWTILTALLIISAESKNLYKRDSEPHIRFLGEVYKKVDTIDFRGLVLITLAQHLQKCPFEELAKQVEQITTLAQACAAGARHADCATPLITLFLNRICAVPELSATYDWSTECCAKSDPERHQCFRAHRNPAPGTHYKRPEPEELCESYKKNKEDVLAHYIYEVSRGHPVLYSPAVLGFAYQFNGICSHCCEEEDKTTCFKDRMTQLKKALHIVEVQQKESCRILDNFGVRVLQALKLVKISKKNPKATFEVAQKLTSEVTHLNEDCCHGDMLECMIERMELTEHTCEHHEDISTKLKTCCEKPLIERTHCIVNLENDDIPEDLPKKVTKFVEDPEVCKLFADKKDIFLAEFLYEYGRRHPELSDQLLLRIAKGYEHQLEKCCELENFLECLKDGEHVLADAIKESTELTEKDCAIQQKLGDYLFQNVLLIRYTKKMPHVTTPSLIHITKHMTEVGDKCCALPNTQKMPCAEGGLSLIIGEFCEMEKTHPINEHVKNCCWKSYSNRRNCFTNLGPDDSYVAPEITDDTFHFTEDLCTLPEEELKNKKQGFIATLVKVKPHVTDELYGQIAVEFTKMREKCCAAEDHQACFNAEEPILIEHCKQLAA.

The signal sequence occupies residues 1 to 16; the sequence is MKWTILTALLIISAES. Positions 17-20 are excised as a propeptide; that stretch reads KNLY. Albumin domains follow at residues 19-209, 210-401, and 403-600; these read LYKR…TQLK, KALH…HVLA, and AIKE…ILIE. Histidine 27 is a binding site for Cu cation. 17 disulfides stabilise this stretch: cysteine 77–cysteine 86, cysteine 99–cysteine 115, cysteine 114–cysteine 125, cysteine 147–cysteine 192, cysteine 191–cysteine 200, cysteine 223–cysteine 269, cysteine 268–cysteine 276, cysteine 288–cysteine 302, cysteine 301–cysteine 312, cysteine 339–cysteine 384, cysteine 383–cysteine 392, cysteine 415–cysteine 461, cysteine 460–cysteine 471, cysteine 484–cysteine 500, cysteine 499–cysteine 510, cysteine 537–cysteine 582, and cysteine 581–cysteine 590. Zn(2+)-binding residues include histidine 270 and aspartate 272. Positions 272 and 275 each coordinate Ca(2+).

This sequence belongs to the ALB/AFP/VDB family. In terms of tissue distribution, plasma. In the skin, widely distributed around the membranes of epithelial layer cells and within the stratum spongiosum of the dermis (at protein level).

The protein localises to the secreted. Its function is as follows. Serum albumin, the main protein of plasma, has a good binding capacity for water, Ca(2+), Na(+), K(+), fatty acids, hormones, bilirubin and drugs. Its main function is the regulation of the colloidal osmotic pressure of blood. Potent inhibitor of trypsin but has no inhibitory effect on thrombin, chymotrypsin, elastase and subtilisin. This Bombina maxima (Giant fire-bellied toad) protein is Serum albumin.